Reading from the N-terminus, the 700-residue chain is Phenylalanine ammonia-lyase hkm12 (700 aa).

Residue Tyr82 is the Proton donor/acceptor of the active site. The 5-imidazolinone (Ala-Gly) cross-link spans 183–185 (ASG). Ser184 is subject to 2,3-didehydroalanine (Ser). Residues Asn242, Gln325, Arg331, Asn361, Lys432, Glu460, and Asn463 each coordinate (E)-cinnamate.

The protein belongs to the PAL/histidase family. Contains an active site 4-methylidene-imidazol-5-one (MIO), which is formed autocatalytically by cyclization and dehydration of residues Ala-Ser-Gly.

The enzyme catalyses L-phenylalanine = (E)-cinnamate + NH4(+). Its pathway is secondary metabolite biosynthesis. Its function is as follows. Phenylalanine ammonia-lyase; part of the gene cluster that mediates the biosynthesis of hancockiamides, an unusual new family of N-cinnamoylated piperazines. The NRPS hkm10 and the NmrA-like reductase hkm9 are proposed to convert two molecules of L-Phe to the intermediary piperazine called xenocockiamide A. Xenocockiamide A is then converted to hancockiamide D via a series of hydroxylations and O-methylations. The tyrosinase hkm6 may catalyze an aromatic hydroxylation, then the 2-oxoglutarate-dependent Fe(II) dioxygenase hkm4 and the FAD-dependent phenol hydroxylase hkm7 may catalyze consecutive hydroxylations to install 2 more hydroxy groups, and the methyltransferase hkm8 probably catalyzes two methylations using 2 molecules of S-adenosyl-L-methionine (SAM). The NRPS hkm11 activates and transfers trans-cinnamate supplied by the PAL hkm12 to hancockiamide D and produces hancockiamide A. NRPS Hkm11 has the flexibility to tolerate the bulky hancockiamide G as a substrate and the absence of the acetyl-transferase hkm3 opens up the opportunity for hkm11 to introduce a second N-cinnamoyl moiety. The cytochrome P450 monooxygenase hkm5 catalyzes the methylenedioxy bridge formation, converting hancockiamide A into hancockiamide G. Hkm5 can also convert hancockiamide B into hancockiamide C, and hancockiamide D into hancockiamide H. The N-acetyltransferase hkm3 finally transfers an acetyl group to 1-N of piperazine, converting hancockiamide A into hancockiamide B and hancockiamide G into hancockiamide C. The sequence is that of Phenylalanine ammonia-lyase hkm12 from Aspergillus hancockii.